Reading from the N-terminus, the 427-residue chain is Histidinol dehydrogenase (427 aa).

The NAD(+) site is built by Y125, Q186, and N209. Positions 234, 256, and 259 each coordinate substrate. Q256 and H259 together coordinate Zn(2+). Active-site proton acceptor residues include E325 and H326. Substrate is bound by residues H326, D359, E413, and H419. Position 359 (D359) interacts with Zn(2+). H419 provides a ligand contact to Zn(2+).

The protein belongs to the histidinol dehydrogenase family. The cofactor is Zn(2+).

It carries out the reaction L-histidinol + 2 NAD(+) + H2O = L-histidine + 2 NADH + 3 H(+). Its pathway is amino-acid biosynthesis; L-histidine biosynthesis; L-histidine from 5-phospho-alpha-D-ribose 1-diphosphate: step 9/9. Functionally, catalyzes the sequential NAD-dependent oxidations of L-histidinol to L-histidinaldehyde and then to L-histidine. This Leptospira interrogans serogroup Icterohaemorrhagiae serovar copenhageni (strain Fiocruz L1-130) protein is Histidinol dehydrogenase.